The primary structure comprises 450 residues: Benzene 1,2-dioxygenase subunit alpha (450 aa).

One can recognise a Rieske domain in the interval 56–163 (LLGHETHIRK…VETYKGLIFA (108 aa)). Residues cysteine 96, histidine 98, cysteine 116, and histidine 119 each coordinate [2Fe-2S] cluster. Positions 222 and 228 each coordinate Fe cation.

The protein belongs to the bacterial ring-hydroxylating dioxygenase alpha subunit family. This dioxygenase system consists of four proteins: the two subunits of the hydroxylase component (BedC1 and BedC2), a ferredoxin (BedB) and a ferredoxin reductase (BedA). The cofactor is [2Fe-2S] cluster. It depends on Fe cation as a cofactor.

The catalysed reaction is benzene + NADH + O2 + H(+) = cis-1,2-dihydrobenzene-1,2-diol + NAD(+). It participates in aromatic compound metabolism; benzene degradation; catechol from benzene: step 1/2. The polypeptide is Benzene 1,2-dioxygenase subunit alpha (bedC1) (Pseudomonas putida (Arthrobacter siderocapsulatus)).